Here is a 260-residue protein sequence, read N- to C-terminus: MLEILYQDPWLVAVNKPAGWLVHRSWLDRDEKVVVMQTVRDQIGQHVFTAHRLDRPTSGVLLMGLSSEAGRRLAQQFEQHHIRKRYHAIVRGWLIDDAVLDYPLVEERDKIADKFAREDKAPQPAVTQYRGLATVEMAVPTGRYPTTRYGLVELEPKTGRKHQLRRHLAHLRHPIIGDSKHGDLRQNRSAAEHFACRRLMLHASRLELTHPFTGQPLIIQAGLDETWMQVLTQFGWRGLLPDNERVEFTAASRQDETHLT.

Aspartate 54 is a catalytic residue.

This sequence belongs to the pseudouridine synthase RluA family.

It catalyses the reaction uridine(65) in tRNA = pseudouridine(65) in tRNA. Functionally, responsible for synthesis of pseudouridine from uracil-65 in transfer RNAs. The polypeptide is tRNA pseudouridine synthase C (truC) (Salmonella typhi).